Reading from the N-terminus, the 118-residue chain is NLIQFGNMIQCANKGSRPSLDYADYGCYCGWGGSGTPVDELDRCCQVHDNCYEQAGKKGCFPKLTLYSWKCTGNVPTCNSKPGCKSFVCACDAAAAKCFAKAPYKKENYNIDTKKRCK.

Cystine bridges form between Cys11–Cys71, Cys27–Cys117, Cys29–Cys45, Cys44–Cys98, Cys51–Cys91, Cys60–Cys84, and Cys78–Cys89. Ca(2+) contacts are provided by Tyr28, Gly30, and Gly32. The active site involves His48. Asp49 contacts Ca(2+). The active site involves Asp92.

This sequence belongs to the phospholipase A2 family. Group I subfamily. D49 sub-subfamily. Ca(2+) is required as a cofactor. In terms of tissue distribution, expressed by the venom gland.

Its subcellular location is the secreted. It carries out the reaction a 1,2-diacyl-sn-glycero-3-phosphocholine + H2O = a 1-acyl-sn-glycero-3-phosphocholine + a fatty acid + H(+). In terms of biological role, PLA2 catalyzes the calcium-dependent hydrolysis of the 2-acyl groups in 3-sn-phosphoglycerides. The chain is Basic phospholipase A2 PA-11 from Pseudechis australis (Mulga snake).